A 53-amino-acid polypeptide reads, in one-letter code: MRLSLYSCCLCIGARRIPTPCLFSYIFTPNLAHFHSPLRSSGFRPAGATRFYS.

This is an uncharacterized protein from Saccharomyces cerevisiae (strain ATCC 204508 / S288c) (Baker's yeast).